Here is a 341-residue protein sequence, read N- to C-terminus: tRNA N6-adenosine threonylcarbamoyltransferase (341 aa).

Fe cation contacts are provided by H111 and H115. Residues 134–138 (LVSGG), D167, G180, and N276 each bind substrate. Position 304 (D304) interacts with Fe cation.

The protein belongs to the KAE1 / TsaD family. It depends on Fe(2+) as a cofactor.

It localises to the cytoplasm. The enzyme catalyses L-threonylcarbamoyladenylate + adenosine(37) in tRNA = N(6)-L-threonylcarbamoyladenosine(37) in tRNA + AMP + H(+). Required for the formation of a threonylcarbamoyl group on adenosine at position 37 (t(6)A37) in tRNAs that read codons beginning with adenine. Is involved in the transfer of the threonylcarbamoyl moiety of threonylcarbamoyl-AMP (TC-AMP) to the N6 group of A37, together with TsaE and TsaB. TsaD likely plays a direct catalytic role in this reaction. The chain is tRNA N6-adenosine threonylcarbamoyltransferase from Pseudomonas putida (strain W619).